A 163-amino-acid chain; its full sequence is Halocyanin (163 aa).

The first 24 residues, 1 to 24 (MKDISRRRFVLGTGATVAAATLAG), serve as a signal peptide directing secretion. C25 is modified (N-acetylcysteine). The S-archaeol cysteine moiety is linked to residue C25. The segment covering 26–38 (NGNGNGNGNGNGN) has biased composition (gly residues). Positions 26-48 (NGNGNGNGNGNGNGEPDTPEGRA) are disordered. Residues 48 to 163 (ADQFLTDNDA…QGMYGAVIVE (116 aa)) form the Plastocyanin-like domain. The Cu cation site is built by H110, C148, H151, and M156.

Its subcellular location is the cell membrane. Electron donor. Binds one copper ion. In Natronomonas pharaonis (Natronobacterium pharaonis), this protein is Halocyanin (hcy).